The primary structure comprises 403 residues: Serine/threonine transporter SstT (403 aa).

A run of 10 helical transmembrane segments spans residues 15–35, 49–69, 85–105, 142–162, 183–203, 218–238, 246–268, 289–309, 317–337, and 362–382; these read LGLI…AIVW, FISA…MTAI, LLYV…SFIF, ALLN…GMML, IVQL…AGTL, LAVI…LIVF, YPLV…SSAA, ISIP…ISVI, LGIG…SLAA, and PDVA…QDAT.

This sequence belongs to the dicarboxylate/amino acid:cation symporter (DAACS) (TC 2.A.23) family.

It localises to the cell inner membrane. It catalyses the reaction L-serine(in) + Na(+)(in) = L-serine(out) + Na(+)(out). The enzyme catalyses L-threonine(in) + Na(+)(in) = L-threonine(out) + Na(+)(out). Functionally, involved in the import of serine and threonine into the cell, with the concomitant import of sodium (symport system). This Chromohalobacter salexigens (strain ATCC BAA-138 / DSM 3043 / CIP 106854 / NCIMB 13768 / 1H11) protein is Serine/threonine transporter SstT.